Reading from the N-terminus, the 414-residue chain is Cytochrome c biogenesis protein Ccs1 (414 aa).

3 consecutive transmembrane segments (helical) span residues leucine 14–isoleucine 34, serine 73–threonine 93, and valine 159–threonine 179.

The protein belongs to the Ccs1/CcsB family. As to quaternary structure, may interact with CcsA.

The protein resides in the plastid. The protein localises to the chloroplast thylakoid membrane. Functionally, required during biogenesis of c-type cytochromes (cytochrome c6 and cytochrome f) at the step of heme attachment. The chain is Cytochrome c biogenesis protein Ccs1 from Guillardia theta (Cryptophyte).